The primary structure comprises 644 residues: Kininogen-1 (644 aa).

A signal peptide spans 1–18; that stretch reads MKLITILFLCSRLLLSLT. Glutamine 19 is modified (pyrrolidone carboxylic acid; in mature form). A Cystatin kininogen-type 1 domain is found at 28–132; it reads CNDKDLFKAV…TQTCQITPAE (105 aa). Intrachain disulfides connect cysteine 28–cysteine 614, cysteine 83–cysteine 94, cysteine 107–cysteine 126, cysteine 142–cysteine 145, cysteine 206–cysteine 218, cysteine 229–cysteine 248, cysteine 264–cysteine 267, cysteine 328–cysteine 340, and cysteine 351–cysteine 370. An N-linked (GlcNAc...) (complex) asparagine glycan is attached at asparagine 48. Residues 120 to 153 form an O-glycosylated at one site only region; the sequence is SVATQTCQITPAEGPVVTAQYDCLGCVHPISTQS. The 104-residue stretch at 151–254 folds into the Cystatin kininogen-type 2 domain; sequence TQSPDLEPIL…SQNCDIYPGK (104 aa). An N-linked (GlcNAc...) asparagine glycan is attached at asparagine 169. Residue asparagine 205 is glycosylated (N-linked (GlcNAc...) (complex) asparagine). A Cystatin kininogen-type 3 domain is found at 273–376; it reads TNSPELEETL…TVNCQPLGMI (104 aa). Asparagine 294 carries an N-linked (GlcNAc...) (complex) asparagine glycan. A Phosphoserine; by FAM20C modification is found at serine 332. Proline 383 is subject to 4-hydroxyproline; partial. Residues 387–555 form a disordered region; the sequence is PFRSSRIGEI…TPIPSLAKPG (169 aa). Residue threonine 401 is glycosylated (O-linked (GalNAc...) threonine). Positions 418 to 434 are enriched in basic and acidic residues; sequence DSGKEQGHTRRHDWGHE. 3 repeats span residues 420–449, 450–479, and 480–510; these read GKEQ…KHER, DQGH…KFKL, and DDDL…KNKG. A compositionally biased stretch (basic residues) spans 435–446; sequence KQRKHNLGHGHK. Basic and acidic residues predominate over residues 477-493; sequence FKLDDDLEHQGGHVLDH. A compositionally biased stretch (basic residues) spans 494–518; that stretch reads GHKHKHGHGHGKHKNKGKKNGKHNG. The segment covering 524 to 539 has biased composition (polar residues); it reads LASSSEDSTTPSAQTQ. 5 O-linked (GalNAc...) threonine glycosylation sites follow: threonine 533, threonine 542, threonine 546, threonine 557, and threonine 571. The O-linked (GalNAc...) serine glycan is linked to serine 577. Residue threonine 628 is glycosylated (O-linked (GalNAc...) threonine).

In terms of assembly, interacts (high molecular weight kininogen) (via amino acids 402-532) with triafestin-1 and triafestin-2, anticoagulant proteins from Triatoma infestans. Interacts (high molecular weight kininogen) (via amino acids 402-532) with short form salivary protein D7R1, an anticoagulant protein from Anopheles stephensi. Interacts (high molecular weight kininogen) (via amino acids 421-466 and 459-513) with haemaphysalin, an anticoagulant protein from Haemaphysalis longicornis. In terms of processing, bradykinin is inactivated by ACE, which removes the dipeptide Arg-Phe from its C-terminus. Bradykinin is released from kininogen by plasma kallikrein. Post-translationally, hydroxylation of Pro-383 occurs prior to the release of bradykinin. In terms of processing, phosphorylated by FAM20C in the extracellular medium. N- and O-glycosylated. O-glycosylated with core 1 or possibly core 8 glycans. Post-translationally, (Microbial infection) Bradykinin is generated upon proteolytic cleavage by S.pyogenes SpeB to produce hypotension during septic shock. Secreted in plasma. T-kinin is detected in malignant ovarian, colon and breast carcinomas, but not in benign tumors.

The protein localises to the secreted. Its subcellular location is the extracellular space. Functionally, kininogens are inhibitors of thiol proteases. HMW-kininogen plays an important role in blood coagulation by helping to position optimally prekallikrein and factor XI next to factor XII; HMW-kininogen inhibits the thrombin- and plasmin-induced aggregation of thrombocytes. LMW-kininogen inhibits the aggregation of thrombocytes. LMW-kininogen is in contrast to HMW-kininogen not involved in blood clotting. In terms of biological role, the active peptide bradykinin is a potent vasodilatator that is released from HMW-kininogen shows a variety of physiological effects: (A) influence in smooth muscle contraction, (B) induction of hypotension, (C) natriuresis and diuresis, (D) decrease in blood glucose level, (E) it is a mediator of inflammation and causes (E1) increase in vascular permeability, (E2) stimulation of nociceptors (4E3) release of other mediators of inflammation (e.g. prostaglandins), (F) it has a cardioprotective effect (directly via bradykinin action, indirectly via endothelium-derived relaxing factor action). This is Kininogen-1 (KNG1) from Homo sapiens (Human).